We begin with the raw amino-acid sequence, 418 residues long: MTVKDYMQQLGRQARAASRDMLAASTDDKNRALVAIADAITANRELIIQENARDLENGRANGLEPAMLDRLELTPARFDGMIEGLRQVAALPDPCGEISDLKYRPSGIQVGKMRVPLGVVGIIYESRPNVTIDAASLCLKSGNATILRGGSEAIHSNQAIAKCIAAGLESVGLPASAVQVVETTDRAAVGELITMAEYVDVIVPRGGRSLIERISNDAKVSVIKHLDGICHVFIDDDADLDKAFNIALNSKTHRYGVCNAMETLLVASSVAEKILPRLATAYAEKSVELRGCDRTLAILPNINAAKPEDWDTEYLAPILAIRVVDDMTAAMDHIAAHSSAHTESIVTENYTKARKFMALVDSASVMVNASTRFADGFQYGLGAEIGISTDKIHARGPVGLEGLTSQKWIVFGDGEILN.

The protein belongs to the gamma-glutamyl phosphate reductase family.

The protein localises to the cytoplasm. It catalyses the reaction L-glutamate 5-semialdehyde + phosphate + NADP(+) = L-glutamyl 5-phosphate + NADPH + H(+). It functions in the pathway amino-acid biosynthesis; L-proline biosynthesis; L-glutamate 5-semialdehyde from L-glutamate: step 2/2. Functionally, catalyzes the NADPH-dependent reduction of L-glutamate 5-phosphate into L-glutamate 5-semialdehyde and phosphate. The product spontaneously undergoes cyclization to form 1-pyrroline-5-carboxylate. The sequence is that of Gamma-glutamyl phosphate reductase from Teredinibacter turnerae (strain ATCC 39867 / T7901).